The primary structure comprises 380 residues: Tryptophan 2,3-dioxygenase (380 aa).

Residues 57–61 (FIITH) and Arg-128 each bind substrate. His-313 provides a ligand contact to heme. Thr-328 contacts substrate.

The protein belongs to the tryptophan 2,3-dioxygenase family. In terms of assembly, homotetramer. Dimer of dimers. Heme is required as a cofactor.

The enzyme catalyses L-tryptophan + O2 = N-formyl-L-kynurenine. The protein operates within amino-acid degradation; L-tryptophan degradation via kynurenine pathway; L-kynurenine from L-tryptophan: step 1/2. It participates in pigment biosynthesis; ommochrome biosynthesis. Heme-dependent dioxygenase that catalyzes the oxidative cleavage of the L-tryptophan (L-Trp) pyrrole ring and converts L-tryptophan to N-formyl-L-kynurenine. Catalyzes the oxidative cleavage of the indole moiety. In Drosophila willistoni (Fruit fly), this protein is Tryptophan 2,3-dioxygenase.